We begin with the raw amino-acid sequence, 443 residues long: Acid phosphatase type 7 (443 aa).

Positions 1–23 (MAAAPPPPPPLLLLLLCVCAVFA) are cleaved as a signal peptide. N-linked (GlcNAc...) asparagine glycosylation is found at N53, N76, and N126. Residues D140, D169, and Y172 each coordinate Fe cation. D169 contributes to the Zn(2+) binding site. Zn(2+) is bound at residue N204. N210 carries an N-linked (GlcNAc...) asparagine glycan. Residue H288 coordinates Zn(2+). N313 is a glycosylation site (N-linked (GlcNAc...) asparagine). Residue H338 coordinates Zn(2+). Position 340 (H340) interacts with Fe cation. Residues N355 and N409 are each glycosylated (N-linked (GlcNAc...) asparagine).

It belongs to the metallophosphoesterase superfamily. Purple acid phosphatase family. The cofactor is Fe cation. Zn(2+) is required as a cofactor.

It localises to the secreted. The catalysed reaction is a phosphate monoester + H2O = an alcohol + phosphate. This Danio rerio (Zebrafish) protein is Acid phosphatase type 7.